We begin with the raw amino-acid sequence, 573 residues long: Diflavin flavoprotein A 1 (573 aa).

Positions 43–236 are zinc metallo-hydrolase; that stretch reads QNGTTYNSYL…GTISTVANGH (194 aa). Fe cation contacts are provided by His92, Glu94, Asp96, His159, Asp178, and His236. The region spanning 265-401 is the Flavodoxin-like domain; that stretch reads VVVFYVADYG…LCDESGTDLG (137 aa). The flavodoxin-reductase-like stretch occupies residues 424 to 573; it reads IGRISGGLYI…VHHRKVGNYY (150 aa).

This sequence in the N-terminal section; belongs to the zinc metallo-hydrolase group 3 family. The protein in the C-terminal section; belongs to the flavodoxin reductase family. In terms of assembly, homodimer. The cofactor is Fe cation. FAD is required as a cofactor. FMN serves as cofactor.

Functionally, mediates electron transfer from NADH to oxygen, reducing it to water. This modular protein has 3 redox cofactors, in other organisms the same activity requires 2 or 3 proteins. The sequence is that of Diflavin flavoprotein A 1 (dfa1) from Synechocystis sp. (strain ATCC 27184 / PCC 6803 / Kazusa).